Here is a 101-residue protein sequence, read N- to C-terminus: MAKKSSIEKNNRRRRMNRNAAAKRARLKAIIGDKTKPMEERFAATLKLAEMPRNSSATRIRNRCELTGRPRSNYRKNKLSRIALRDLGSRGLVPGLVKSSW.

Residues 1–10 (MAKKSSIEKN) are compositionally biased toward basic and acidic residues. The segment at 1–23 (MAKKSSIEKNNRRRRMNRNAAAK) is disordered. Basic residues predominate over residues 11-23 (NRRRRMNRNAAAK).

The protein belongs to the universal ribosomal protein uS14 family. Part of the 30S ribosomal subunit. Contacts proteins S3 and S10.

Functionally, binds 16S rRNA, required for the assembly of 30S particles and may also be responsible for determining the conformation of the 16S rRNA at the A site. This Nitrobacter winogradskyi (strain ATCC 25391 / DSM 10237 / CIP 104748 / NCIMB 11846 / Nb-255) protein is Small ribosomal subunit protein uS14.